Here is a 943-residue protein sequence, read N- to C-terminus: Sodium- and chloride-dependent GABA transporter ine (943 aa).

Residues 1–345 (MAENKDVSQV…RQQHWANKMQ (345 aa)) lie on the Cytoplasmic side of the membrane. The disordered stretch occupies residues 103–122 (HKQSPLRHTSVRTRPSSEVL). Transmembrane regions (helical) follow at residues 346 to 366 (FVLACIGYSVGLGNVWRFPYM), 373 to 393 (GVFLVPYCIILFICSIPLLFM), and 418 to 438 (GAGLASVVVSFLMSTYYSVII). The Extracellular portion of the chain corresponds to 439-510 (GYSIYYFFTS…GLEYPGMMRW (72 aa)). N476 is a glycosylation site (N-linked (GlcNAc...) asparagine). The next 9 membrane-spanning stretches (helical) occupy residues 511-531 (ELFACLICAWLMVYFATWKSI), 539-559 (YFTATFPFVLIIILMVRAVTL), 591-607 (FNSLGITFGSMISFASY), 618-638 (TVAVSAVNMITSLLVGIFAFS), 679-699 (WAVMFFFMLLCLGLNSQFAIV), 723-743 (IVVLFVCVISCLFGMPNIIQG), 754-774 (YAASVTIMFLAFCQMIAIAWF), 799-819 (CWLVLGPCLLFAIWVLSLINY), and 836-856 (YGIGWMFASFSLICIPGYAVI). The Cytoplasmic portion of the chain corresponds to 857–943 (NFLRSSGDTF…HAEAGGPCGQ (87 aa)).

This sequence belongs to the sodium:neurotransmitter symporter (SNF) (TC 2.A.22) family. In terms of tissue distribution, expressed both maternally and zygotically. Developing embryos exhibit expression in the posterior hindgut, foregut, midgut, Malpighian tubules, anal plate, Garland cells, and a subset of cells in the central nervous system. Central nervous system expression is seen in segmentally repeating in cells flanking the midline of the ventral ganglion. Isoform A and isoform B are colocalized in both the nervous system and the fluid reabsorption system.

It localises to the membrane. In terms of biological role, plays a role in neuronal membrane excitation, important for normal response properties of the photoreceptor. Able to control excitability from either neurons or glia cells. Ine negatively regulates neuronal sodium channels. Controls neurotransmitter-mediated signaling pathways associated with the structure of the larval peripheral nerve, ine and eag control perineurial glial growth through partially redundant pathways. Isoform A and isoform B are both functional, although isoform A functions with greater efficiency. Has a role in osmolyte transport within the Malpighian tubule and hindgut. This Drosophila melanogaster (Fruit fly) protein is Sodium- and chloride-dependent GABA transporter ine.